The sequence spans 188 residues: Guanylate kinase (188 aa).

Residues 4–183 enclose the Guanylate kinase-like domain; it reads RNIVVLTAPS…AVEETLTRIR (180 aa). An ATP-binding site is contributed by 11–18; the sequence is APSGAGKT.

The protein belongs to the guanylate kinase family.

It is found in the cytoplasm. The catalysed reaction is GMP + ATP = GDP + ADP. In terms of biological role, essential for recycling GMP and indirectly, cGMP. The protein is Guanylate kinase of Salinibacter ruber (strain DSM 13855 / M31).